The sequence spans 277 residues: Urease accessory protein UreD (277 aa).

It belongs to the UreD family. As to quaternary structure, ureD, UreF and UreG form a complex that acts as a GTP-hydrolysis-dependent molecular chaperone, activating the urease apoprotein by helping to assemble the nickel containing metallocenter of UreC. The UreE protein probably delivers the nickel.

The protein resides in the cytoplasm. Functionally, required for maturation of urease via the functional incorporation of the urease nickel metallocenter. The protein is Urease accessory protein UreD of Yersinia pestis (strain Pestoides F).